A 495-amino-acid polypeptide reads, in one-letter code: Calcium-dependent protein kinase 11 (495 aa).

Positions 26-284 (YLLGKKLGQG…AHEALCHPWI (259 aa)) constitute a Protein kinase domain. Residues 32–40 (LGQGQFGTT) and Lys55 contribute to the ATP site. Asp150 functions as the Proton acceptor in the catalytic mechanism. Ser190 bears the Phosphoserine mark. Residues 290 to 320 (APDKPLDPAVLSRLKQFSQMNKIKKMALRVI) form an autoinhibitory domain region. EF-hand domains follow at residues 327–362 (EEIG…VGSE), 363–398 (LMES…MNKM), 399–434 (EREE…FGLC), and 438–468 (LDDM…GDGV). Residues Asp340, Asp342, Ser344, Thr346, Glu351, Asp376, Asp378, Ser380, Thr382, Glu387, Asp412, Asp414, Ser416, Tyr418, Glu423, Asp446, Asp448, Asp450, Lys452, and Glu457 each contribute to the Ca(2+) site.

This sequence belongs to the protein kinase superfamily. Ser/Thr protein kinase family. CDPK subfamily. As to quaternary structure, interacts with Di19.

It is found in the cytoplasm. The protein localises to the nucleus. The catalysed reaction is L-seryl-[protein] + ATP = O-phospho-L-seryl-[protein] + ADP + H(+). The enzyme catalyses L-threonyl-[protein] + ATP = O-phospho-L-threonyl-[protein] + ADP + H(+). With respect to regulation, activated by calcium. Autophosphorylation may play an important role in the regulation of the kinase activity. In terms of biological role, may play a role in signal transduction pathways that involve calcium as a second messenger. Functions as a regulator of the calcium-mediated abscisic acid (ABA) signaling pathway. Phosphorylates ABA-responsive transcription factors ABF1 and ABF4 in vitro. The sequence is that of Calcium-dependent protein kinase 11 (CPK11) from Arabidopsis thaliana (Mouse-ear cress).